Reading from the N-terminus, the 218-residue chain is uncharacterized protein (218 aa).

The RING-type zinc-finger motif lies at 154–199 (CFICTMEYSRTDKNLHPIILNCGHNLCRSCINKLTGNGIVKCPFDR).

This is an uncharacterized protein from Caenorhabditis elegans.